A 159-amino-acid polypeptide reads, in one-letter code: Ribosomal RNA large subunit methyltransferase H (159 aa).

S-adenosyl-L-methionine contacts are provided by residues L76, G108, and 127–132; that span reads FGRLTL.

This sequence belongs to the RNA methyltransferase RlmH family. In terms of assembly, homodimer.

It localises to the cytoplasm. The catalysed reaction is pseudouridine(1915) in 23S rRNA + S-adenosyl-L-methionine = N(3)-methylpseudouridine(1915) in 23S rRNA + S-adenosyl-L-homocysteine + H(+). Specifically methylates the pseudouridine at position 1915 (m3Psi1915) in 23S rRNA. The polypeptide is Ribosomal RNA large subunit methyltransferase H (Streptococcus uberis (strain ATCC BAA-854 / 0140J)).